The primary structure comprises 178 residues: ATP synthase subunit delta (178 aa).

Belongs to the ATPase delta chain family. In terms of assembly, F-type ATPases have 2 components, F(1) - the catalytic core - and F(0) - the membrane proton channel. F(1) has five subunits: alpha(3), beta(3), gamma(1), delta(1), epsilon(1). F(0) has three main subunits: a(1), b(2) and c(10-14). The alpha and beta chains form an alternating ring which encloses part of the gamma chain. F(1) is attached to F(0) by a central stalk formed by the gamma and epsilon chains, while a peripheral stalk is formed by the delta and b chains.

The protein resides in the cell inner membrane. Functionally, f(1)F(0) ATP synthase produces ATP from ADP in the presence of a proton or sodium gradient. F-type ATPases consist of two structural domains, F(1) containing the extramembraneous catalytic core and F(0) containing the membrane proton channel, linked together by a central stalk and a peripheral stalk. During catalysis, ATP synthesis in the catalytic domain of F(1) is coupled via a rotary mechanism of the central stalk subunits to proton translocation. In terms of biological role, this protein is part of the stalk that links CF(0) to CF(1). It either transmits conformational changes from CF(0) to CF(1) or is implicated in proton conduction. The protein is ATP synthase subunit delta of Pseudomonas syringae pv. syringae (strain B728a).